The primary structure comprises 98 residues: Serine protease inhibitor Kazal-type 14 (98 aa).

A signal peptide spans 1-23 (MVKYFQVLWSLLFSIMLHSMLLA). The Kazal-like domain occupies 35-98 (GLIKIKCPYK…QIRYYHTGRC (64 aa)). Intrachain disulfides connect C41–C80, C58–C77, and C66–C98. A glycan (N-linked (GlcNAc...) asparagine) is linked at N52.

The protein localises to the secreted. May be a serine protease inhibitor. This Rattus norvegicus (Rat) protein is Serine protease inhibitor Kazal-type 14 (Spink14).